The chain runs to 351 residues: Quinolinate phosphoribosyltransferase [decarboxylating] 2a, mitochondrial (351 aa).

Substrate-binding positions include R142, 173–175, R197, K207, E240, D267, 299–301, and 320–322; these read TRK, SGN, and SGA.

The protein belongs to the NadC/ModD family. As to expression, expressed in roots and flowers.

It localises to the mitochondrion. The enzyme catalyses nicotinate beta-D-ribonucleotide + CO2 + diphosphate = quinolinate + 5-phospho-alpha-D-ribose 1-diphosphate + 2 H(+). It functions in the pathway alkaloid biosynthesis; nicotine biosynthesis. The protein operates within cofactor biosynthesis; NAD(+) biosynthesis; nicotinate D-ribonucleotide from quinolinate: step 1/1. In terms of biological role, involved in the biosynthesis of pyridine alkaloid natural products, leading mainly to the production of anabasine, anatabine, nicotine and nornicotine, effective deterrents against herbivores with antiparasitic and pesticide properties (neurotoxins); nornicotine serves as the precursor in the synthesis of the carcinogen compound N'-nitrosonornicotine (NNN). Involved in the catabolism of quinolinic acid (QA). This Nicotiana tabacum (Common tobacco) protein is Quinolinate phosphoribosyltransferase [decarboxylating] 2a, mitochondrial.